The sequence spans 84 residues: Molybdopterin synthase sulfur carrier subunit (84 aa).

Glycine 84 is subject to 1-thioglycine; alternate. Glycine 84 bears the Glycyl adenylate; alternate mark.

This sequence belongs to the MoaD family. MOCS2A subfamily. As to quaternary structure, heterotetramer; composed of 2 small (MOCS2A) and 2 large (MOCS2B) subunits. Post-translationally, C-terminal thiocarboxylation occurs in 2 steps, it is first acyl-adenylated (-COAMP) via the hesA/moeB/thiF part of MOCS3, then thiocarboxylated (-COSH) via the rhodanese domain of MOCS3.

The protein resides in the cytoplasm. It participates in cofactor biosynthesis; molybdopterin biosynthesis. Functionally, acts as a sulfur carrier required for molybdopterin biosynthesis. Component of the molybdopterin synthase complex that catalyzes the conversion of precursor Z into molybdopterin by mediating the incorporation of 2 sulfur atoms into precursor Z to generate a dithiolene group. In the complex, serves as sulfur donor by being thiocarboxylated (-COSH) at its C-terminus by MOCS3. After interaction with MOCS2B, the sulfur is then transferred to precursor Z to form molybdopterin. In Caenorhabditis elegans, this protein is Molybdopterin synthase sulfur carrier subunit.